The following is a 146-amino-acid chain: Protein LDOC1 (146 aa).

Belongs to the LDOC1 family. In terms of assembly, interacts with NOD2. Ubiquitously expressed with high levels in brain ant thyroid and low expression in placenta, liver and leukocytes. Expressed as well in six of the seven human breast cancer cell lines examined.

It localises to the nucleus. In terms of biological role, may have an important role in the development and/or progression of some cancers. The protein is Protein LDOC1 (LDOC1) of Homo sapiens (Human).